A 502-amino-acid chain; its full sequence is ATP synthase subunit alpha (502 aa).

A disordered region spans residues 115-135 (VDGLGPINTTNTRPIESPAPG). 169–176 (GDRQTGKT) is an ATP binding site.

This sequence belongs to the ATPase alpha/beta chains family. As to quaternary structure, F-type ATPases have 2 components, CF(1) - the catalytic core - and CF(0) - the membrane proton channel. CF(1) has five subunits: alpha(3), beta(3), gamma(1), delta(1), epsilon(1). CF(0) has three main subunits: a(1), b(2) and c(9-12). The alpha and beta chains form an alternating ring which encloses part of the gamma chain. CF(1) is attached to CF(0) by a central stalk formed by the gamma and epsilon chains, while a peripheral stalk is formed by the delta and b chains.

Its subcellular location is the cell membrane. It catalyses the reaction ATP + H2O + 4 H(+)(in) = ADP + phosphate + 5 H(+)(out). Produces ATP from ADP in the presence of a proton gradient across the membrane. The alpha chain is a regulatory subunit. This chain is ATP synthase subunit alpha, found in Bacillus cereus (strain G9842).